Here is a 910-residue protein sequence, read N- to C-terminus: Protein translocase subunit SecA (910 aa).

ATP-binding positions include glutamine 86, 104–108, and aspartate 508; that span reads GEGKT. Residues cysteine 894, cysteine 896, cysteine 905, and cysteine 906 each coordinate Zn(2+).

Belongs to the SecA family. In terms of assembly, monomer and homodimer. Part of the essential Sec protein translocation apparatus which comprises SecA, SecYEG and auxiliary proteins SecDF. Other proteins may also be involved. Requires Zn(2+) as cofactor.

Its subcellular location is the cell membrane. It is found in the cytoplasm. It carries out the reaction ATP + H2O + cellular proteinSide 1 = ADP + phosphate + cellular proteinSide 2.. Part of the Sec protein translocase complex. Interacts with the SecYEG preprotein conducting channel. Has a central role in coupling the hydrolysis of ATP to the transfer of proteins into and across the cell membrane, serving as an ATP-driven molecular motor driving the stepwise translocation of polypeptide chains across the membrane. The protein is Protein translocase subunit SecA of Acetivibrio thermocellus (strain ATCC 27405 / DSM 1237 / JCM 9322 / NBRC 103400 / NCIMB 10682 / NRRL B-4536 / VPI 7372) (Clostridium thermocellum).